The following is a 301-amino-acid chain: MRTTLTHLQQLEAESIHIIREVVAEFANPVMLYSIGKDSAVMLHLARKAFYPAPPPFPLLHVDTTWKFRDMIQFRDRMAAECGFDLIVHVNKEGVEQGISPFTHGSALYTDIMKTEGLKQALDKYRFDAAFGGARRDEEKSRAKERIFSFRSANHRWDPKNQRPELWNLYNTRIKQGESIRVFPLSNWTELDVWQYIHLENIPIVPLYYAAVRPVVERDGMLIMVDDERLELKPGETVQHKSVRFRTLGCYPLTGAVESTADTLPKIIQEMLLTRTSERQGRLIDHDQAGSMEKKKQEGYF.

Belongs to the PAPS reductase family. CysD subfamily. Heterodimer composed of CysD, the smaller subunit, and CysN.

It catalyses the reaction sulfate + ATP + H(+) = adenosine 5'-phosphosulfate + diphosphate. The protein operates within sulfur metabolism; hydrogen sulfide biosynthesis; sulfite from sulfate: step 1/3. Its function is as follows. With CysN forms the ATP sulfurylase (ATPS) that catalyzes the adenylation of sulfate producing adenosine 5'-phosphosulfate (APS) and diphosphate, the first enzymatic step in sulfur assimilation pathway. APS synthesis involves the formation of a high-energy phosphoric-sulfuric acid anhydride bond driven by GTP hydrolysis by CysN coupled to ATP hydrolysis by CysD. This is Sulfate adenylyltransferase subunit 2 from Geobacter metallireducens (strain ATCC 53774 / DSM 7210 / GS-15).